The sequence spans 384 residues: DNA dC-&gt;dU-editing enzyme APOBEC-3G (384 aa).

Residues 1–60 (MKPHFRNPVERMYQDTFSDNFYNRPILSRRNTVWLCYEVKTKGPSRPPLDAKIFRGQVYS) form an essential for cytoplasmic localization region. 2 CMP/dCMP-type deaminase domains span residues 29–138 (RRNT…LRSL) and 214–328 (GRHE…LRTL). A Phosphothreonine; by PKA modification is found at Thr-32. His-65, Cys-97, and Cys-100 together coordinate Zn(2+). The tract at residues 209–336 (ELWVRGRHET…TLAKAGAEIS (128 aa)) is necessary for homooligomerization. Residues 213-215 (RGR) are interaction with DNA. Thr-218 carries the post-translational modification Phosphothreonine; by PKA and CAMK2. A Zn(2+)-binding site is contributed by His-257. Glu-259 serves as the catalytic Proton donor. The Zn(2+) site is built by Cys-288 and Cys-291. The tract at residues 313-320 (RIYDDQGR) is interaction with DNA.

Belongs to the cytidine and deoxycytidylate deaminase family. In terms of assembly, homodimer. Homooligomer. Can bind RNA to form ribonucleoprotein complexes of high-molecular-mass (HMM) or low-molecular-mass (LMM). HMM is inactive and heterogeneous in protein composition because of binding nonselectively to cellular RNAs, which in turn are associated with variety of cellular proteins. The LMM form which is enzymatically active has few or no RNAs associated. Its ability to form homooligomer is distinct from its ability to assemble into HMM. Interacts with APOBEC3B, APOBEC3F, MOV10, AGO2, EIF4E, EIF4ENIF1, DCP2 and DDX6 in an RNA-dependent manner. Interacts with AGO1, AGO3 and PKA/PRKACA. The cofactor is Zn(2+).

The protein resides in the cytoplasm. Its subcellular location is the nucleus. The protein localises to the P-body. The catalysed reaction is a 2'-deoxycytidine in single-stranded DNA + H2O + H(+) = a 2'-deoxyuridine in single-stranded DNA + NH4(+). Its function is as follows. DNA deaminase (cytidine deaminase) which acts as an inhibitor of retrovirus replication and retrotransposon mobility via deaminase-dependent and -independent mechanisms. After the penetration of retroviral nucleocapsids into target cells of infection and the initiation of reverse transcription, it can induce the conversion of cytosine to uracil in the minus-sense single-strand viral DNA, leading to G-to-A hypermutations in the subsequent plus-strand viral DNA. The resultant detrimental levels of mutations in the proviral genome, along with a deamination-independent mechanism that works prior to the proviral integration, together exert efficient antiretroviral effects in infected target cells. Selectively targets single-stranded DNA and does not deaminate double-stranded DNA or single- or double-stranded RNA. May inhibit the mobility of LTR retrotransposons. The sequence is that of DNA dC-&gt;dU-editing enzyme APOBEC-3G (APOBEC3G) from Pan paniscus (Pygmy chimpanzee).